Reading from the N-terminus, the 94-residue chain is Lipolysis-activating peptide 1-beta chain (94 aa).

A signal peptide spans 1-19 (MKILAVVLISVIVLNTANG). Positions 20-87 (ENYYPQKYTN…YFNALESQCP (68 aa)) constitute an LCN-type CS-alpha/beta domain. 3 disulfide bridges follow: Cys34-Cys56, Cys42-Cys66, and Cys46-Cys68.

This sequence belongs to the long (3 C-C) scorpion toxin superfamily. In terms of assembly, homodimer; disulfide-linked or monomer (edited version) or heterodimer of an alpha chain (AC P0CI44 or AC P0CI45) and this beta chain (non-edited version). As to expression, expressed by the venom gland.

The protein resides in the secreted. Functionally, the homodimer inhibits HMG-CoA reductase (HMGCR) (32% of inhibition produced by 0.6 uM), a glycoprotein involved in the control of cholesterol biosynthesis. The inhibitory effects of bumarsin are seen at much lower concentrations (0.6 uM) than that for statins such as atorvastatin (5 mM) and simvastatin (10 uM). In addition to inhibition of HMG-CoA reductase, this protein lowers cholesterol levels by inducing steroid hormone synthesis via StAR, and by increasing reverse cholesterol transport mediated by the induction of ABCA1 and APOA1. In terms of biological role, the heterodimer non-edited LVP1 induces lipolysis in rat adipocytes. Induction of lipolysis by LVP1 appears to be mediated through the beta-2 adrenergic receptor pathway (ADRB2). The monomer edited version, similar to alpha-toxins, may modulate voltage-gated sodium channels (Nav) and may block voltage-gated potassium channels (Kv). The chain is Lipolysis-activating peptide 1-beta chain from Lychas mucronatus (Chinese swimming scorpion).